The sequence spans 938 residues: Probable outer membrane protein pmp15 (938 aa).

Residues 1 to 17 (MRFFCFGMLLPFTFVLA) form the signal peptide. The Autotransporter domain maps to 659–938 (DEEKGHAASL…YLNVASRMRF (280 aa)).

This sequence belongs to the PMP outer membrane protein family.

Its subcellular location is the secreted. The protein localises to the cell wall. The protein resides in the cell outer membrane. In Chlamydia pneumoniae (Chlamydophila pneumoniae), this protein is Probable outer membrane protein pmp15 (pmp15).